Here is a 1017-residue protein sequence, read N- to C-terminus: Probable DNA ligase (1017 aa).

Residues 1 to 363 form a unknown region; it reads MPWDVKFSHG…PACATPLHAP (363 aa). The tract at residues 326–352 is disordered; that stretch reads GIRSSPPQVRAGDATPSSRSSGDAGVA. The DNA ligase stretch occupies residues 364–1017; it reads DSFARFVAAA…GARPPPAASD (654 aa). Glu667 serves as a coordination point for ATP. Lys669 functions as the N6-AMP-lysine intermediate in the catalytic mechanism. Residues Arg674, Arg689, Glu717, Arg860, and Lys866 each contribute to the ATP site.

It in the C-terminal section; belongs to the ATP-dependent DNA ligase family. The cofactor is Mg(2+).

The catalysed reaction is ATP + (deoxyribonucleotide)n-3'-hydroxyl + 5'-phospho-(deoxyribonucleotide)m = (deoxyribonucleotide)n+m + AMP + diphosphate.. Functionally, DNA ligase that seals nicks in double-stranded DNA during DNA replication, DNA recombination and DNA repair. The protein is Probable DNA ligase (lig) of Opitutus terrae (strain DSM 11246 / JCM 15787 / PB90-1).